The following is a 235-amino-acid chain: Putative N-acetylmannosamine-6-phosphate 2-epimerase (235 aa).

This sequence belongs to the NanE family.

The catalysed reaction is an N-acyl-D-glucosamine 6-phosphate = an N-acyl-D-mannosamine 6-phosphate. It participates in amino-sugar metabolism; N-acetylneuraminate degradation; D-fructose 6-phosphate from N-acetylneuraminate: step 3/5. Functionally, converts N-acetylmannosamine-6-phosphate (ManNAc-6-P) to N-acetylglucosamine-6-phosphate (GlcNAc-6-P). This is Putative N-acetylmannosamine-6-phosphate 2-epimerase from Edwardsiella ictaluri (strain 93-146).